Consider the following 115-residue polypeptide: Peptidyl-tRNA hydrolase (115 aa).

The protein belongs to the PTH2 family.

It localises to the cytoplasm. It carries out the reaction an N-acyl-L-alpha-aminoacyl-tRNA + H2O = an N-acyl-L-amino acid + a tRNA + H(+). In terms of biological role, the natural substrate for this enzyme may be peptidyl-tRNAs which drop off the ribosome during protein synthesis. This Archaeoglobus fulgidus (strain ATCC 49558 / DSM 4304 / JCM 9628 / NBRC 100126 / VC-16) protein is Peptidyl-tRNA hydrolase.